The primary structure comprises 139 residues: Large ribosomal subunit protein uL13 (139 aa).

It belongs to the universal ribosomal protein uL13 family. As to quaternary structure, part of the 50S ribosomal subunit.

Functionally, this protein is one of the early assembly proteins of the 50S ribosomal subunit, although it is not seen to bind rRNA by itself. It is important during the early stages of 50S assembly. This chain is Large ribosomal subunit protein uL13, found in Methanococcoides burtonii (strain DSM 6242 / NBRC 107633 / OCM 468 / ACE-M).